Here is a 93-residue protein sequence, read N- to C-terminus: Large ribosomal subunit protein uL23cz/uL23cy (93 aa).

Belongs to the universal ribosomal protein uL23 family. Part of the 50S ribosomal subunit.

The protein resides in the plastid. It is found in the chloroplast. Binds to 23S rRNA. The protein is Large ribosomal subunit protein uL23cz/uL23cy (rpl23-A) of Oenothera elata subsp. hookeri (Hooker's evening primrose).